The following is a 505-amino-acid chain: Protein nucleotidyltransferase YdiU (505 aa).

Residues glycine 102, glycine 104, arginine 105, lysine 125, aspartate 137, glycine 138, arginine 188, and arginine 195 each contribute to the ATP site. Residue aspartate 264 is the Proton acceptor of the active site. The Mg(2+) site is built by asparagine 265 and aspartate 274. Aspartate 274 serves as a coordination point for ATP. The segment at 485 to 505 is disordered; sequence FADYGKPPAPGEEVQQTFCGT.

The protein belongs to the SELO family. It depends on Mg(2+) as a cofactor. The cofactor is Mn(2+).

It catalyses the reaction L-seryl-[protein] + ATP = 3-O-(5'-adenylyl)-L-seryl-[protein] + diphosphate. It carries out the reaction L-threonyl-[protein] + ATP = 3-O-(5'-adenylyl)-L-threonyl-[protein] + diphosphate. The enzyme catalyses L-tyrosyl-[protein] + ATP = O-(5'-adenylyl)-L-tyrosyl-[protein] + diphosphate. The catalysed reaction is L-histidyl-[protein] + UTP = N(tele)-(5'-uridylyl)-L-histidyl-[protein] + diphosphate. It catalyses the reaction L-seryl-[protein] + UTP = O-(5'-uridylyl)-L-seryl-[protein] + diphosphate. It carries out the reaction L-tyrosyl-[protein] + UTP = O-(5'-uridylyl)-L-tyrosyl-[protein] + diphosphate. Nucleotidyltransferase involved in the post-translational modification of proteins. It can catalyze the addition of adenosine monophosphate (AMP) or uridine monophosphate (UMP) to a protein, resulting in modifications known as AMPylation and UMPylation. This is Protein nucleotidyltransferase YdiU from Nitrobacter hamburgensis (strain DSM 10229 / NCIMB 13809 / X14).